The sequence spans 131 residues: Large ribosomal subunit protein bL17 (131 aa).

The protein belongs to the bacterial ribosomal protein bL17 family. Part of the 50S ribosomal subunit. Contacts protein L32.

In Cupriavidus necator (strain ATCC 17699 / DSM 428 / KCTC 22496 / NCIMB 10442 / H16 / Stanier 337) (Ralstonia eutropha), this protein is Large ribosomal subunit protein bL17.